The following is a 341-amino-acid chain: HTH-type transcriptional repressor PurR (341 aa).

In terms of domain architecture, HTH lacI-type spans 2–56; the sequence is ATIKDVAKHAGVSTTTVSHVINKTRFVAENTKAAVWAAIKELHYSPSAVARSLKV. A DNA-binding region (H-T-H motif) is located at residues 4–23; that stretch reads IKDVAKHAGVSTTTVSHVIN. The DNA-binding element occupies 48–56; the sequence is SAVARSLKV. Positions 73, 190, 192, 221, and 275 each coordinate hypoxanthine.

As to quaternary structure, homodimer.

Its pathway is purine metabolism; purine nucleotide biosynthesis [regulation]. Its function is as follows. Is the main repressor of the genes involved in the de novo synthesis of purine nucleotides, regulating purB, purC, purEK, purF, purHD, purL, purMN and guaBA expression. PurR is allosterically activated to bind its cognate DNA by binding the purine corepressors, hypoxanthine or guanine, thereby effecting transcription repression. This chain is HTH-type transcriptional repressor PurR, found in Yersinia enterocolitica serotype O:8 / biotype 1B (strain NCTC 13174 / 8081).